The following is a 340-amino-acid chain: Solute carrier family 35 member G3 (340 aa).

The tract at residues Pro11 to Asn31 is disordered. Transmembrane regions (helical) follow at residues Thr39–Phe59, Leu69–Leu89, Phe107–Val127, Ala160–Gly180, Leu189–Leu209, Thr223–Leu243, Cys257–Thr277, Leu283–Leu303, and Val307–Ala327. The 126-residue stretch at Leu51–Gly176 folds into the EamA 1 domain. In terms of domain architecture, EamA 2 spans Thr223–Ala327.

Belongs to the SLC35G solute transporter family.

It is found in the membrane. The sequence is that of Solute carrier family 35 member G3 (Slc35g3) from Rattus norvegicus (Rat).